A 496-amino-acid polypeptide reads, in one-letter code: Glycerol kinase (496 aa).

Threonine 12 lines the ADP pocket. Positions 12, 13, and 14 each coordinate ATP. Position 12 (threonine 12) interacts with sn-glycerol 3-phosphate. Residue arginine 16 coordinates ADP. Arginine 82, glutamate 83, and tyrosine 134 together coordinate sn-glycerol 3-phosphate. Arginine 82, glutamate 83, and tyrosine 134 together coordinate glycerol. Histidine 230 carries the phosphohistidine; by HPr modification. Sn-glycerol 3-phosphate is bound at residue aspartate 244. Aspartate 244 and glutamine 245 together coordinate glycerol. ADP is bound by residues threonine 266 and glycine 309. Residues threonine 266, glycine 309, glutamine 313, and glycine 410 each contribute to the ATP site. Residues glycine 410 and asparagine 414 each coordinate ADP.

Belongs to the FGGY kinase family. In terms of assembly, homotetramer and homodimer (in equilibrium). Post-translationally, the phosphoenolpyruvate-dependent sugar phosphotransferase system (PTS), including enzyme I, and histidine-containing protein (HPr) are required for the phosphorylation, which leads to the activation of the enzyme.

The catalysed reaction is glycerol + ATP = sn-glycerol 3-phosphate + ADP + H(+). Its pathway is polyol metabolism; glycerol degradation via glycerol kinase pathway; sn-glycerol 3-phosphate from glycerol: step 1/1. Activated by phosphorylation and inhibited by fructose 1,6-bisphosphate (FBP). Its function is as follows. Key enzyme in the regulation of glycerol uptake and metabolism. Catalyzes the phosphorylation of glycerol to yield sn-glycerol 3-phosphate. The polypeptide is Glycerol kinase (Bacillus velezensis (strain DSM 23117 / BGSC 10A6 / LMG 26770 / FZB42) (Bacillus amyloliquefaciens subsp. plantarum)).